A 462-amino-acid polypeptide reads, in one-letter code: C4-dicarboxylate transport transcriptional regulatory protein DctD (462 aa).

The region spanning 12–126 is the Response regulatory domain; sequence QVLLIDDDPH…ALLDSVRRAL (115 aa). At Asp-61 the chain carries 4-aspartylphosphate. Residues 152-381 form the Sigma-54 factor interaction domain; sequence LIGRSAGMQR…LQNAAERFAL (230 aa). Residues 180–187 and 243–252 each bind ATP; these read GETGAGKE and ANGGTLFLDE.

Post-translationally, phosphorylated by DctB.

Its function is as follows. Member of the two-component regulatory system DctB/DctD, which regulates C4-dicarboxylate transport via regulation of expression of the dctPQM operon and dctA. The polypeptide is C4-dicarboxylate transport transcriptional regulatory protein DctD (Pseudomonas aeruginosa (strain ATCC 15692 / DSM 22644 / CIP 104116 / JCM 14847 / LMG 12228 / 1C / PRS 101 / PAO1)).